The following is a 365-amino-acid chain: Caffeic acid 3-O-methyltransferase (365 aa).

Residue 130-136 participates in substrate binding; that stretch reads MNQDKVL. The substrate binding stretch occupies residues 162–180; it reads AFDYHGTDPRFNKVFNKGM. S-adenosyl-L-methionine is bound by residues Gly-208, Asp-231, Asp-251, Met-252, and Lys-265. The active-site Proton acceptor is His-269.

The protein belongs to the class I-like SAM-binding methyltransferase superfamily. Cation-independent O-methyltransferase family. COMT subfamily. In terms of assembly, homodimer.

The enzyme catalyses (E)-caffeate + S-adenosyl-L-methionine = (E)-ferulate + S-adenosyl-L-homocysteine + H(+). It functions in the pathway aromatic compound metabolism; phenylpropanoid biosynthesis. Its function is as follows. Catalyzes the conversion of caffeic acid to ferulic acid and of 5-hydroxyferulic acid to sinapic acid. The resulting products may subsequently be converted to the corresponding alcohols that are incorporated into lignins. This Rosa chinensis (China rose) protein is Caffeic acid 3-O-methyltransferase (COMT1).